The following is a 317-amino-acid chain: Flavin-dependent thymidylate synthase (317 aa).

Ser46 is an FAD binding site. Positions 55–166 are insert; that stretch reads FEWKKEKWIE…ELETDMDFYT (112 aa). Residues 100-317 form the ThyX domain; that stretch reads AVKERIKEAF…YRGTDKKNVI (218 aa). Residues 178 to 181, 189 to 193, and Arg259 each bind dUMP; these read QWMR and EVSKR. Residues 181 to 183 and Glu189 each bind FAD; that span reads RHR. A ThyX motif motif is present at residues 181 to 191; that stretch reads RHRFGSYNEVS. Asn281 is an FAD binding site. Residue Arg286 participates in dUMP binding. The active-site Involved in ionization of N3 of dUMP, leading to its activation is the Arg286.

It belongs to the thymidylate synthase ThyX family. As to quaternary structure, homotetramer. Requires FAD as cofactor.

It carries out the reaction dUMP + (6R)-5,10-methylene-5,6,7,8-tetrahydrofolate + NADPH + H(+) = dTMP + (6S)-5,6,7,8-tetrahydrofolate + NADP(+). It functions in the pathway pyrimidine metabolism; dTTP biosynthesis. In terms of biological role, catalyzes the reductive methylation of 2'-deoxyuridine-5'-monophosphate (dUMP) to 2'-deoxythymidine-5'-monophosphate (dTMP) while utilizing 5,10-methylenetetrahydrofolate (mTHF) as the methyl donor, and NADPH and FADH(2) as the reductant. The chain is Flavin-dependent thymidylate synthase from Aquifex aeolicus (strain VF5).